A 397-amino-acid chain; its full sequence is Ribosomal RNA large subunit methyltransferase I (397 aa).

The PUA domain maps to 2-80 (SAAIYLVKGR…QDVNRAFFVK (79 aa)).

Belongs to the methyltransferase superfamily. RlmI family.

It localises to the cytoplasm. It catalyses the reaction cytidine(1962) in 23S rRNA + S-adenosyl-L-methionine = 5-methylcytidine(1962) in 23S rRNA + S-adenosyl-L-homocysteine + H(+). Its function is as follows. Specifically methylates the cytosine at position 1962 (m5C1962) of 23S rRNA. This chain is Ribosomal RNA large subunit methyltransferase I, found in Vibrio vulnificus (strain YJ016).